The primary structure comprises 1123 residues: uncharacterized protein (1123 aa).

This is an uncharacterized protein from Ictaluridae (bullhead catfishes).